Consider the following 87-residue polypeptide: Small ribosomal subunit protein bS18 (87 aa).

This sequence belongs to the bacterial ribosomal protein bS18 family. As to quaternary structure, part of the 30S ribosomal subunit. Forms a tight heterodimer with protein bS6.

Its function is as follows. Binds as a heterodimer with protein bS6 to the central domain of the 16S rRNA, where it helps stabilize the platform of the 30S subunit. In Oleidesulfovibrio alaskensis (strain ATCC BAA-1058 / DSM 17464 / G20) (Desulfovibrio alaskensis), this protein is Small ribosomal subunit protein bS18.